A 124-amino-acid polypeptide reads, in one-letter code: Large ribosomal subunit protein bL17 (124 aa).

The protein belongs to the bacterial ribosomal protein bL17 family. As to quaternary structure, part of the 50S ribosomal subunit. Contacts protein L32.

In Persephonella marina (strain DSM 14350 / EX-H1), this protein is Large ribosomal subunit protein bL17.